The chain runs to 1251 residues: Botulinum neurotoxin type E (1251 aa).

His-212 is a binding site for Zn(2+). The active site involves Glu-213. Zn(2+) is bound by residues His-216 and Glu-251. Cys-412 and Cys-426 are joined by a disulfide. Residues 423 to 819 (KSICIEINNG…ELNSMVIDTL (397 aa)) form a translocation domain (TD) region. The segment at 466-515 (NDLDQVILNFNSESAPGLSDEKLNLTIQNDAYIPKYDSNGTSDIEQHDVN) is belt. The tract at residues 845 to 1067 (KRIKSSSVLN…EIQTLYNNEP (223 aa)) is N-terminus of receptor binding domain (N-RBD). Residues 1068–1251 (NANILKDFWG…ISEEHGWQEK (184 aa)) are C-terminus of receptor binding domain (C-RBD). The Host ganglioside-binding motif motif lies at 1221–1224 (STWY).

It belongs to the peptidase M27 family. In terms of assembly, heterodimer; disulfide-linked heterodimer of a light chain (LC) and a heavy chain (HC). The LC has the proteolytic/pharmacological activity, while the N- and C-terminal of the HC mediate channel formation and toxin binding, respectively. Interacts with host synaptic vesicle glycoproteins SV2A and SV2B which probably serve as coreceptors. The cofactor is Zn(2+).

The protein localises to the secreted. It localises to the host cytoplasm. Its subcellular location is the host cytosol. It is found in the host synapse. The protein resides in the host presynaptic cell membrane. The protein localises to the host cytoplasmic vesicle. It localises to the host secretory vesicle. Its subcellular location is the host synaptic vesicle membrane. It catalyses the reaction Limited hydrolysis of proteins of the neuroexocytosis apparatus, synaptobrevins, SNAP25 or syntaxin. No detected action on small molecule substrates.. Botulinum toxin causes flaccid paralysis by inhibiting neurotransmitter (acetylcholine) release from the presynaptic membranes of nerve terminals of eukaryotic host skeletal and autonomic nervous system, with frequent heart or respiratory failure. Precursor of botulinum neurotoxin E which has 2 coreceptors; complex polysialylated gangliosides found on neural tissue and specific membrane-anchored proteins found in synaptic vesicles. Receptor proteins are exposed on host presynaptic cell membrane during neurotransmitter release, when the toxin heavy chain (HC) binds to them. Upon synaptic vesicle recycling the toxin is taken up via the endocytic pathway. When the pH of the toxin-containing endosome drops a structural rearrangement occurs so that the N-terminus of the HC forms pores that allows the light chain (LC) to translocate into the cytosol. Once in the cytosol the disulfide bond linking the 2 subunits is reduced and LC cleaves its target protein on synaptic vesicles, preventing their fusion with the cytoplasmic membrane and thus neurotransmitter release. Its function is as follows. Has proteolytic activity. After translocation into the eukaryotic host cytosol, LC hydrolyzes the '180-Arg-|-Ile-181' bond in SNAP25, blocking neurotransmitter release. Functionally, responsible for host epithelial cell transcytosis, host nerve cell targeting and translocation of light chain (LC) into host cytosol. Composed of 3 subdomains; the translocation domain (TD), and N-terminus and C-terminus of the receptor-binding domain (RBD). The RBD is responsible for the adherence of the toxin to the cell surface. It simultaneously recognizes 2 coreceptors; host polysialated gangliosides and the receptor proteins SV2A and SV2B in close proximity on host synaptic vesicles. Interaction with SV2 proteins requires SV2 glycosylation. The N-terminus of the TD wraps an extended belt around the perimeter of the LC, protecting Zn(2+) in the active site; it may also prevent premature LC dissociation from the translocation channel and protect toxin prior to translocation. The TD inserts into synaptic vesicle membrane to allow translocation into the host cytosol. Binds ganglioside GD1a in vitro. The sequence is that of Botulinum neurotoxin type E from Clostridium butyricum.